Here is a 652-residue protein sequence, read N- to C-terminus: Leucine-rich repeat-containing protein 4 (652 aa).

Positions 1–40 (MKLLWQVTVHHTWNAVLLPVVYLTAQVWILCAAIAAAASA) are cleaved as a signal peptide. Residues 41–74 (GPQNCPSVCSCSNQFSKVVCTRRGLSEVPQGIPS) enclose the LRRNT domain. Topologically, residues 41–526 (GPQNCPSVCS…SLDEVMKTTK (486 aa)) are extracellular. 2 cysteine pairs are disulfide-bonded: Cys-45–Cys-51 and Cys-49–Cys-60. 9 LRR repeats span residues 75–96 (NTRY…TFRH), 99–120 (HLEV…AFNG), 123–144 (SLNT…AFEY), 147–168 (KLRE…AFNR), 171–193 (SLMR…AFEG), 196–217 (NLKY…TPLV), 218–239 (GLEE…SFHG), 242–263 (SLKK…AFDG), and 266–287 (SLVE…LFTP). N-linked (GlcNAc...) asparagine glycans are attached at residues Asn-276, Asn-321, Asn-362, Asn-387, Asn-409, Asn-433, Asn-439, and Asn-449. An LRRCT domain is found at 299-351 (NPWNCDCDILWLAWWLREYIPTNSTCCGRCHAPMHMRGRYLVEVDQAAFQCSA). 2 disulfide bridges follow: Cys-303/Cys-328 and Cys-305/Cys-349. The Ig-like domain maps to 352-441 (PFIMDAPRDL…SNASAYLNVS (90 aa)). An intrachain disulfide couples Cys-373 to Cys-423. The chain crosses the membrane as a helical span at residues 527–547 (IIIGCFVAVTLLAAAMLIVFY). Over 548 to 652 (KLRKRHQQRS…TKDKVQETQI (105 aa)) the chain is Cytoplasmic.

Interacts (via LRR repeats) with NTNG2. Interacts with DLG4. Forms a complex with DLG4 and with NMDA receptors. In terms of processing, N-glycosylated. In terms of tissue distribution, specifically expressed in brain. In the hippocampus, parietal cortex and piriform cortex expressed in proximal segments of CA1 pyramidal neurons.

Its subcellular location is the membrane. The protein localises to the postsynaptic cell membrane. Synaptic adhesion protein. Regulates the formation of exitatory synapses through the recruitment of pre-and-postsynaptic proteins. Organize the lamina/pathway-specific differentiation of dendrites. Plays an important role for auditory synaptic responses. Involved in the suppression of glioma. The protein is Leucine-rich repeat-containing protein 4 (Lrrc4) of Mus musculus (Mouse).